The following is a 294-amino-acid chain: MHNIFKGLITALITPFKDNKLDLYALERIVKHQIKHEVDAVLIAGSTGESSSLSFEEYKLLLQTSVEIVNKCIPIISGCSSNNTTYARALAAESTKIGVDGFMASPPSYVKPTQHGIYKHFEALHEACNLPIMLYSAPTRSGVDFSDETILRLSKLPRIVALKDCGVDLERPLRIRATVKKDFNILTGNDEVVLAFNAQGGVGWTSVASNIVPNICKELLEKWNKNDTKGALEIHQKLLPLYTALFVESNPIPIKYAAYYLGLCENEIRPPLTEARDSAKKQIENIITSLSIKI.

T47 contacts pyruvate. The active-site Proton donor/acceptor is Y135. Catalysis depends on K163, which acts as the Schiff-base intermediate with substrate. T205 contributes to the pyruvate binding site.

The protein belongs to the DapA family. In terms of assembly, homotetramer; dimer of dimers.

It is found in the cytoplasm. It catalyses the reaction L-aspartate 4-semialdehyde + pyruvate = (2S,4S)-4-hydroxy-2,3,4,5-tetrahydrodipicolinate + H2O + H(+). It participates in amino-acid biosynthesis; L-lysine biosynthesis via DAP pathway; (S)-tetrahydrodipicolinate from L-aspartate: step 3/4. Its function is as follows. Catalyzes the condensation of (S)-aspartate-beta-semialdehyde [(S)-ASA] and pyruvate to 4-hydroxy-tetrahydrodipicolinate (HTPA). The sequence is that of 4-hydroxy-tetrahydrodipicolinate synthase from Rickettsia peacockii (strain Rustic).